Reading from the N-terminus, the 155-residue chain is SsrA-binding protein (155 aa).

It belongs to the SmpB family.

The protein localises to the cytoplasm. Required for rescue of stalled ribosomes mediated by trans-translation. Binds to transfer-messenger RNA (tmRNA), required for stable association of tmRNA with ribosomes. tmRNA and SmpB together mimic tRNA shape, replacing the anticodon stem-loop with SmpB. tmRNA is encoded by the ssrA gene; the 2 termini fold to resemble tRNA(Ala) and it encodes a 'tag peptide', a short internal open reading frame. During trans-translation Ala-aminoacylated tmRNA acts like a tRNA, entering the A-site of stalled ribosomes, displacing the stalled mRNA. The ribosome then switches to translate the ORF on the tmRNA; the nascent peptide is terminated with the 'tag peptide' encoded by the tmRNA and targeted for degradation. The ribosome is freed to recommence translation, which seems to be the essential function of trans-translation. This Lawsonia intracellularis (strain PHE/MN1-00) protein is SsrA-binding protein.